A 211-amino-acid polypeptide reads, in one-letter code: uncharacterized protein (211 aa).

This is an uncharacterized protein from Archaeoglobus fulgidus (strain ATCC 49558 / DSM 4304 / JCM 9628 / NBRC 100126 / VC-16).